The following is a 213-amino-acid chain: ATP-dependent Clp protease proteolytic subunit (213 aa).

The active-site Nucleophile is Ser114. His139 is a catalytic residue.

The protein belongs to the peptidase S14 family. Fourteen ClpP subunits assemble into 2 heptameric rings which stack back to back to give a disk-like structure with a central cavity, resembling the structure of eukaryotic proteasomes.

It localises to the cytoplasm. It carries out the reaction Hydrolysis of proteins to small peptides in the presence of ATP and magnesium. alpha-casein is the usual test substrate. In the absence of ATP, only oligopeptides shorter than five residues are hydrolyzed (such as succinyl-Leu-Tyr-|-NHMec, and Leu-Tyr-Leu-|-Tyr-Trp, in which cleavage of the -Tyr-|-Leu- and -Tyr-|-Trp bonds also occurs).. In terms of biological role, cleaves peptides in various proteins in a process that requires ATP hydrolysis. Has a chymotrypsin-like activity. Plays a major role in the degradation of misfolded proteins. This chain is ATP-dependent Clp protease proteolytic subunit, found in Pseudomonas entomophila (strain L48).